The following is a 329-amino-acid chain: Delta-aminolevulinic acid dehydratase (329 aa).

Positions 122, 124, 131, and 132 each coordinate Zn(2+). Lys-199 acts as the Schiff-base intermediate with substrate in catalysis. The residue at position 199 (Lys-199) is an N6-succinyllysine. Arg-209 contributes to the 5-aminolevulinate binding site. Ser-215 carries the post-translational modification Phosphoserine. Arg-221 provides a ligand contact to 5-aminolevulinate. Cys-223 lines the Zn(2+) pocket. The Schiff-base intermediate with substrate role is filled by Lys-252. N6-succinyllysine is present on Lys-252. Positions 279 and 318 each coordinate 5-aminolevulinate.

Belongs to the ALAD family. Homooctamer; active form. Homohexamer; low activity form. Zn(2+) serves as cofactor.

The protein resides in the cytoplasm. It is found in the cytosol. The enzyme catalyses 2 5-aminolevulinate = porphobilinogen + 2 H2O + H(+). It functions in the pathway porphyrin-containing compound metabolism; protoporphyrin-IX biosynthesis; coproporphyrinogen-III from 5-aminolevulinate: step 1/4. Its activity is regulated as follows. Can alternate between a fully active homooctamer and a low-activity homohexamer. A bound magnesium ion may promote the assembly of the fully active homooctamer. The magnesium-binding site is absent in the low-activity homohexamer. Inhibited by compounds that favor the hexameric state. Inhibited by divalent lead ions. The lead ions partially displace the zinc cofactor. In terms of biological role, catalyzes an early step in the biosynthesis of tetrapyrroles. Binds two molecules of 5-aminolevulinate per subunit, each at a distinct site, and catalyzes their condensation to form porphobilinogen. The sequence is that of Delta-aminolevulinic acid dehydratase (ALAD) from Bos taurus (Bovine).